A 523-amino-acid polypeptide reads, in one-letter code: 2-isopropylmalate synthase (523 aa).

One can recognise a Pyruvate carboxyltransferase domain in the interval 5 to 267 (VIIFDTTLRD…HTNINHHEIW (263 aa)). The Mn(2+) site is built by Asp-14, His-202, His-204, and Asn-238. Residues 392–523 (RLDYFSVQSG…QNKENNKETV (132 aa)) are regulatory domain.

It belongs to the alpha-IPM synthase/homocitrate synthase family. LeuA type 1 subfamily. Homodimer. The cofactor is Mn(2+).

It localises to the cytoplasm. The enzyme catalyses 3-methyl-2-oxobutanoate + acetyl-CoA + H2O = (2S)-2-isopropylmalate + CoA + H(+). Its pathway is amino-acid biosynthesis; L-leucine biosynthesis; L-leucine from 3-methyl-2-oxobutanoate: step 1/4. In terms of biological role, catalyzes the condensation of the acetyl group of acetyl-CoA with 3-methyl-2-oxobutanoate (2-ketoisovalerate) to form 3-carboxy-3-hydroxy-4-methylpentanoate (2-isopropylmalate). The sequence is that of 2-isopropylmalate synthase from Salmonella dublin (strain CT_02021853).